Here is a 502-residue protein sequence, read N- to C-terminus: ATP synthase subunit alpha (502 aa).

Residue 169–176 coordinates ATP; that stretch reads GDRQTGKT.

It belongs to the ATPase alpha/beta chains family. As to quaternary structure, F-type ATPases have 2 components, CF(1) - the catalytic core - and CF(0) - the membrane proton channel. CF(1) has five subunits: alpha(3), beta(3), gamma(1), delta(1), epsilon(1). CF(0) has three main subunits: a(1), b(2) and c(9-12). The alpha and beta chains form an alternating ring which encloses part of the gamma chain. CF(1) is attached to CF(0) by a central stalk formed by the gamma and epsilon chains, while a peripheral stalk is formed by the delta and b chains.

It is found in the cell inner membrane. The catalysed reaction is ATP + H2O + 4 H(+)(in) = ADP + phosphate + 5 H(+)(out). Functionally, produces ATP from ADP in the presence of a proton gradient across the membrane. The alpha chain is a regulatory subunit. This chain is ATP synthase subunit alpha, found in Nitratidesulfovibrio vulgaris (strain ATCC 29579 / DSM 644 / CCUG 34227 / NCIMB 8303 / VKM B-1760 / Hildenborough) (Desulfovibrio vulgaris).